We begin with the raw amino-acid sequence, 45 residues long: Ribosome-inactivating protein TAP-29 (45 aa).

Belongs to the ribosome-inactivating protein family. Type 1 RIP subfamily.

It catalyses the reaction Endohydrolysis of the N-glycosidic bond at one specific adenosine on the 28S rRNA.. Functionally, capable of inhibiting HIV-1 infection and replication. It inactivates eukaryotic 60S ribosomal subunits. The polypeptide is Ribosome-inactivating protein TAP-29 (Trichosanthes kirilowii (Chinese snake gourd)).